Consider the following 75-residue polypeptide: Translation initiation factor IF-1, chloroplastic (75 aa).

It belongs to the IF-1 family. As to quaternary structure, component of the 30S ribosomal translation pre-initiation complex which assembles on the 30S ribosome in the order IF-2 and IF-3, IF-1 and N-formylmethionyl-tRNA(fMet); mRNA recruitment can occur at any time during PIC assembly.

It is found in the plastid. It localises to the chloroplast. Functionally, one of the essential components for the initiation of protein synthesis. Stabilizes the binding of IF-2 and IF-3 on the 30S subunit to which N-formylmethionyl-tRNA(fMet) subsequently binds. Helps modulate mRNA selection, yielding the 30S pre-initiation complex (PIC). Upon addition of the 50S ribosomal subunit IF-1, IF-2 and IF-3 are released leaving the mature 70S translation initiation complex. The polypeptide is Translation initiation factor IF-1, chloroplastic (infA) (Cucumis sativus (Cucumber)).